Here is a 2179-residue protein sequence, read N- to C-terminus: Voltage-dependent L-type calcium channel subunit alpha-1D (2179 aa).

3 disordered regions span residues methionine 1–alanine 21, threonine 30–threonine 49, and lysine 64–serine 100. Residues methionine 1–lysine 126 lie on the Cytoplasmic side of the membrane. Positions glycine 38–threonine 49 are enriched in polar residues. Positions glutamine 82–lysine 93 are enriched in basic residues. The I repeat unit spans residues asparagine 113–phenylalanine 409. Residues proline 127 to isoleucine 145 traverse the membrane as a helical segment. Residues tyrosine 146–lysine 163 lie on the Extracellular side of the membrane. The chain crosses the membrane as a helical span at residues valine 164–tyrosine 183. Residues glycine 184–asparagine 195 lie on the Cytoplasmic side of the membrane. A helical transmembrane segment spans residues glycine 196–leucine 214. At glutamate 215–aspartate 235 the chain is on the extracellular side. The helical transmembrane segment at valine 236–valine 254 threads the bilayer. The Cytoplasmic segment spans residues proline 255–histidine 273. The chain crosses the membrane as a helical span at residues isoleucine 274–phenylalanine 293. At isoleucine 294–tryptophan 381 the chain is on the extracellular side. A Ca(2+)-binding site is contributed by glutamate 364. A helical membrane pass occupies residues proline 382 to serine 406. At glycine 407 to valine 543 the chain is on the cytoplasmic side. Residues glutamine 429–glutamate 446 are binding to the beta subunit. Residues aspartate 449–serine 480 form a disordered region. Polar residues predominate over residues asparagine 463–valine 479. One copy of the II repeat lies at asparagine 529 to leucine 775. The chain crosses the membrane as a helical span at residues threonine 544–glutamate 563. The Extracellular segment spans residues histidine 564–alanine 578. Residues asparagine 579–leucine 597 form a helical membrane-spanning segment. The Cytoplasmic portion of the chain corresponds to glycine 598 to serine 605. A helical membrane pass occupies residues leucine 606–leucine 624. At valine 625 to glycine 634 the chain is on the extracellular side. The helical transmembrane segment at valine 635 to tryptophan 653 threads the bilayer. Topologically, residues threonine 654–serine 672 are cytoplasmic. A helical membrane pass occupies residues leucine 673 to glycine 693. Residues glycine 694 to isoleucine 747 are Extracellular-facing. Glutamate 725 serves as a coordination point for Ca(2+). The chain crosses the membrane as a helical span at residues valine 748–valine 772. Residues alanine 771 to lysine 810 adopt a coiled-coil conformation. At aspartate 773 to histidine 906 the chain is on the cytoplasmic side. A compositionally biased stretch (basic and acidic residues) spans lysine 786–lysine 810. Positions lysine 786–glutamate 870 are disordered. Residues proline 811 to lysine 822 show a composition bias toward polar residues. The span at valine 845 to glutamate 858 shows a compositional bias: acidic residues. The stretch at asparagine 893–phenylalanine 1175 is one III repeat. Residues isoleucine 907–alanine 925 traverse the membrane as a helical segment. Residues glutamate 926–tyrosine 941 lie on the Extracellular side of the membrane. A helical membrane pass occupies residues phenylalanine 942 to phenylalanine 961. The Cytoplasmic portion of the chain corresponds to glycine 962–asparagine 973. A helical membrane pass occupies residues tyrosine 974–isoleucine 992. Over glutamine 993–serine 998 the chain is Extracellular. The helical transmembrane segment at valine 999–alanine 1018 threads the bilayer. At lysine 1019–asparagine 1037 the chain is on the cytoplasmic side. A helical transmembrane segment spans residues isoleucine 1038 to phenylalanine 1057. Topologically, residues lysine 1058–glutamate 1147 are extracellular. The tract at residues arginine 1095 to asparagine 1185 is dihydropyridine binding. Position 1121 (glutamate 1121) interacts with Ca(2+). Residues isoleucine 1148–valine 1168 form a helical membrane-spanning segment. At glycine 1169–serine 1225 the chain is on the cytoplasmic side. The stretch at asparagine 1212–phenylalanine 1487 is one IV repeat. A helical membrane pass occupies residues proline 1226–methionine 1244. At glutamine 1245–isoleucine 1259 the chain is on the extracellular side. The chain crosses the membrane as a helical span at residues leucine 1260–phenylalanine 1279. At lysine 1280–serine 1286 the chain is on the cytoplasmic side. A helical membrane pass occupies residues aspartate 1287–glutamate 1308. The Extracellular portion of the chain corresponds to alanine 1309 to isoleucine 1333. The helical transmembrane segment at serine 1334–glycine 1353 threads the bilayer. The Cytoplasmic segment spans residues glutamate 1354–tyrosine 1372. The chain crosses the membrane as a helical span at residues valine 1373 to phenylalanine 1392. Residues glycine 1393–phenylalanine 1459 are Extracellular-facing. The dihydropyridine binding stretch occupies residues leucine 1440–lysine 1506. Residues glutamate 1452–serine 1495 are phenylalkylamine binding. The chain crosses the membrane as a helical span at residues alanine 1460–methionine 1484. Topologically, residues aspartate 1485–leucine 2179 are cytoplasmic. Disordered stretches follow at residues leucine 1704–lysine 1789, phenylalanine 1896–phenylalanine 1941, and glycine 2135–aspartate 2171. Positions serine 1764–methionine 1782 are enriched in polar residues. Residues serine 2156 to aspartate 2171 show a composition bias toward acidic residues.

It belongs to the calcium channel alpha-1 subunit (TC 1.A.1.11) family. CACNA1D subfamily. As to quaternary structure, voltage-dependent calcium channels are multisubunit complexes, consisting of alpha-1, alpha-2, beta and delta subunits in a 1:1:1:1 ratio. The channel activity is directed by the pore-forming and voltage-sensitive alpha-1 subunit. In many cases, this subunit is sufficient to generate voltage-sensitive calcium channel activity. The auxiliary subunits beta and alpha-2/delta linked by a disulfide bridge regulate the channel activity. Interacts (via IQ domain) with CABP1 and CABP4 in a calcium independent manner. Interacts with RIMBP2. Expressed in the inner hair cells (IHC) of the cochlea.

It is found in the membrane. The catalysed reaction is Ca(2+)(in) = Ca(2+)(out). Voltage-sensitive calcium channels (VSCC) mediate the entry of calcium ions into excitable cells and are also involved in a variety of calcium-dependent processes, including muscle contraction, hormone or neurotransmitter release, gene expression, cell motility, cell division and cell death. The isoform alpha-1D gives rise to L-type calcium currents. Long-lasting (L-type) calcium channels belong to the 'high-voltage activated' (HVA) group. They are blocked by dihydropyridines (DHP), phenylalkylamines, and by benzothiazepines. The protein is Voltage-dependent L-type calcium channel subunit alpha-1D (Cacna1d) of Mus musculus (Mouse).